The following is an 81-amino-acid chain: MNVEHEVNLLVEEIHRLGSKNADGKLSVKFGVLFQDDRCANLFEALVGTLKAAKRRKIVTYAGELLLQGVHDDVDIVLLQD.

Met-1 is modified (N-acetylmethionine).

Belongs to the costars family.

This is Costars family protein ABRACL (Abracl) from Mus musculus (Mouse).